A 355-amino-acid chain; its full sequence is Serum paraoxonase/arylesterase 1 (355 aa).

Cys-42 and Cys-353 are joined by a disulfide. Residues Glu-53 and Asp-54 each coordinate Ca(2+). His-115 acts as the Proton acceptor in catalysis. Residues Ile-117, Asn-168, Asp-169, and Asn-224 each contribute to the Ca(2+) site. N-linked (GlcNAc...) asparagine glycosylation occurs at Asn-253. 2 residues coordinate Ca(2+): Asp-269 and Asn-270. Residues Asn-270 and Asn-324 are each glycosylated (N-linked (GlcNAc...) asparagine).

The protein belongs to the paraoxonase family. Homodimer. Interacts with CLU. It depends on Ca(2+) as a cofactor. The signal sequence is not cleaved. In terms of tissue distribution, plasma, liver, kidney, heart, brain, small intestine and lung. In the plasma, associated with HDL.

Its subcellular location is the secreted. It localises to the extracellular space. It carries out the reaction a phenyl acetate + H2O = a phenol + acetate + H(+). The catalysed reaction is An aryl dialkyl phosphate + H2O = dialkyl phosphate + an aryl alcohol.. The enzyme catalyses an N-acyl-L-homoserine lactone + H2O = an N-acyl-L-homoserine + H(+). Hydrolyzes the toxic metabolites of a variety of organophosphorus insecticides. Capable of hydrolyzing a broad spectrum of organophosphate substrates and lactones, and a number of aromatic carboxylic acid esters. Mediates an enzymatic protection of low density lipoproteins against oxidative modification. The polypeptide is Serum paraoxonase/arylesterase 1 (Pon1) (Mus musculus (Mouse)).